Here is a 166-residue protein sequence, read N- to C-terminus: MSNIEKQAGELQEKLIAVNRVSKTVKGGRIMSFTALTVVGDGNGRVGFGYGKAREVPAAIQKAMEKARRNMINVALNEGTLQHPVKGSHTGSRVFMQPASEGTGIIAGGAMRAVLEVAGVRNVLSKAYGSTNPINVVRATIDALANMKSPEMVAAKRGKTVEEILG.

An S5 DRBM domain is found at 11 to 74 (LQEKLIAVNR…EKARRNMINV (64 aa)).

Belongs to the universal ribosomal protein uS5 family. As to quaternary structure, part of the 30S ribosomal subunit. Contacts proteins S4 and S8.

With S4 and S12 plays an important role in translational accuracy. In terms of biological role, located at the back of the 30S subunit body where it stabilizes the conformation of the head with respect to the body. The polypeptide is Small ribosomal subunit protein uS5 (Actinobacillus pleuropneumoniae serotype 5b (strain L20)).